A 518-amino-acid polypeptide reads, in one-letter code: Protein CYCLOPS (518 aa).

The segment at 401-451 (DKKRKSLERYGSITSAVSDDKGDTTKKRRVERSRKMAEAKERNSTPSVPSD) is disordered. 2 consecutive short sequence motifs (nuclear localization signal) follow at residues 402–405 (KKRK) and 426–429 (KKRR). The span at 433 to 443 (SRKMAEAKERN) shows a compositional bias: basic and acidic residues. A coiled-coil region spans residues 452 to 518 (MQAVLKRCEN…ERILSETEKM (67 aa)).

It belongs to the CYCLOPS family. Forms homodimers. Interacts with CCAMK. In terms of processing, phosphorylated at the N-terminus by CCAMK. Expressed in roots.

It is found in the nucleus. In terms of biological role, involved in symbiotic signaling. Required for root infection by symbiotic rhizobia, infection thread (IT) formation, and nodule development. Probably not involved in nodule organogenesis. Involved in arbuscular mycorrhizal (AM) symbiosis. Required for fungal infection of the outer cortical cell layers, and for arbuscule development during the AM symbiosis, by binding, as a complex comprising CCaMK, CYCLOPS, and DELLA, to RAM1 promoter cis element thus promoting its expression. Acts downstream of CCAMK. Binds to the promoter of ERN1 and strongly transactivates ERN1, a transcriptional regulator required for nodulation. This is Protein CYCLOPS from Lotus japonicus (Lotus corniculatus var. japonicus).